Consider the following 481-residue polypeptide: Wax ester synthase/diacylglycerol acyltransferase 1 (481 aa).

Residues 1–185 (MKAEKVMERE…TTATKKPADS (185 aa)) lie on the Cytoplasmic side of the membrane. Residue His147 is the Proton acceptor of the active site. A helical membrane pass occupies residues 186–206 (MAWWLFVGFWFMIRVTFTTIV). Residues 207 to 481 (EFSKLMLTVC…QGEIFHKTEV (275 aa)) are Lumenal-facing.

In the N-terminal section; belongs to the long-chain O-acyltransferase family. In terms of tissue distribution, expressed in flowers, siliques, top parts of stems, and leaves. Not found in roots, seeds and young seedlings.

The protein localises to the cell membrane. Its subcellular location is the endoplasmic reticulum membrane. The enzyme catalyses a long chain fatty alcohol + a fatty acyl-CoA = a wax ester + CoA. It catalyses the reaction an acyl-CoA + a 1,2-diacyl-sn-glycerol = a triacyl-sn-glycerol + CoA. It functions in the pathway glycerolipid metabolism; triacylglycerol biosynthesis. The protein operates within lipid metabolism. Bifunctional wax ester synthase/diacylglycerol acyltransferase. Involved in cuticular wax biosynthesis. Required to reduce leaf water loss, especially during drought. The chain is Wax ester synthase/diacylglycerol acyltransferase 1 from Arabidopsis thaliana (Mouse-ear cress).